The following is a 522-amino-acid chain: Transactivator/viroplasmin protein (522 aa).

The segment at 488–522 (DASADEGTTDKSGPPPTRSIVEKEDVPNTSSKQVD) is disordered.

The protein belongs to the caulimoviridae viroplasmin family.

It localises to the host cytoplasm. Functionally, enhances the ribosomal termination-reinitiation event leading to the translation of major open reading frames on the polycistronic viral RNAs. This Cauliflower mosaic virus (strain D/H) (CaMV) protein is Transactivator/viroplasmin protein.